The primary structure comprises 317 residues: Putrescine transport system permease protein PotH (317 aa).

Residues 1–31 lie on the Cytoplasmic side of the membrane; the sequence is MSTLEPAAQSKPPGGFKLWLSQLQMKHGRKL. Residues 32 to 51 traverse the membrane as a helical segment; that stretch reads VIALPYIWLILLFLLPFLIV. Topologically, residues 52 to 104 are periplasmic; the sequence is FKISLAEMARAIPPYTELMEWADGQLSITLNLGNFLQLTDDPLYFDAYLQSLQ. Positions 99–305 constitute an ABC transmembrane type-1 domain; the sequence is YLQSLQVAAI…LLLIVPIMWF (207 aa). The helical transmembrane segment at 105 to 124 threads the bilayer; that stretch reads VAAISTFCCLLIGYPLAWAV. The Cytoplasmic segment spans residues 125–133; that stretch reads AHSKPSTRN. The helical transmembrane segment at 134–153 threads the bilayer; it reads ILLLLVILPSWTSFLIRVYA. At 154–184 the chain is on the periplasmic side; sequence WMGILKNNGVLNNFLLWLGVIDQPLTILHTN. A helical membrane pass occupies residues 185-204; that stretch reads LAVYIGIVYAYVPFMVLPIY. The Cytoplasmic segment spans residues 205 to 239; sequence TALIRIDYSLVEAALDLGARPLKTFFTVIVPLTKG. The helical transmembrane segment at 240–259 threads the bilayer; that stretch reads GIIAGSMLVFIPAVGEFVIP. Residues 260-284 lie on the Periplasmic side of the membrane; it reads ELLGGPDSIMIGRVLWQEFFNNRDW. The helical transmembrane segment at 285 to 304 threads the bilayer; that stretch reads PVASAVAIIMLLLLIVPIMW. Over 305-317 the chain is Cytoplasmic; sequence FHKHQQKSVGEHG.

Belongs to the binding-protein-dependent transport system permease family. CysTW subfamily. The complex is composed of two ATP-binding proteins (PotG), two transmembrane proteins (PotH and PotI) and a solute-binding protein (PotF).

It localises to the cell inner membrane. Its activity is regulated as follows. Transport is feedback inhibited by intracellular polyamines. Functionally, part of the ABC transporter complex PotFGHI involved in putrescine uptake. Responsible for the translocation of the substrate across the membrane. Imports putrescine for maintenance of the optimal concentration of polyamines necessary for cell growth in the presence of glucose. This is Putrescine transport system permease protein PotH from Escherichia coli (strain K12).